We begin with the raw amino-acid sequence, 127 residues long: Large ribosomal subunit protein eL8 (127 aa).

It belongs to the eukaryotic ribosomal protein eL8 family. Part of the 50S ribosomal subunit. Component of box C/D small ribonucleoprotein (sRNP) particles that contain rpl7ae, FlpA and nop5, plus a guide RNA. These sRNP particles form homodimers, giving rise to an asymmetric holoenzyme. Probably part of the RNase P complex.

The protein resides in the cytoplasm. Functionally, multifunctional RNA-binding protein that recognizes the K-turn motif in ribosomal RNA, the RNA component of RNase P, box H/ACA, box C/D and box C'/D' sRNAs. The protein is Large ribosomal subunit protein eL8 of Saccharolobus solfataricus (strain ATCC 35092 / DSM 1617 / JCM 11322 / P2) (Sulfolobus solfataricus).